Consider the following 61-residue polypeptide: Metallothionein-2B (61 aa).

The residue at position 1 (methionine 1) is an N-acetylmethionine. The interval 1 to 29 (MDPNCSCATGDSCTCASSCKCKECKCTSC) is beta. The a divalent metal cation site is built by cysteine 5, cysteine 7, cysteine 13, cysteine 15, cysteine 19, cysteine 21, cysteine 24, cysteine 26, cysteine 29, cysteine 33, cysteine 34, cysteine 36, cysteine 37, cysteine 41, cysteine 44, cysteine 48, cysteine 50, cysteine 57, cysteine 59, and cysteine 60. The interval 30–61 (KKSCCSCCPAGCTKCAQGCICKGASDKCSCCA) is alpha.

The protein belongs to the metallothionein superfamily. Type 1 family. In terms of assembly, monomer.

Functionally, metallothioneins have a high content of cysteine residues that bind various heavy metals; these proteins are transcriptionally regulated by both heavy metals and glucocorticoids. In Oryctolagus cuniculus (Rabbit), this protein is Metallothionein-2B.